The sequence spans 105 residues: Co-chaperonin GroES (105 aa).

It belongs to the GroES chaperonin family. As to quaternary structure, heptamer of 7 subunits arranged in a ring. Interacts with the chaperonin GroEL.

The protein resides in the cytoplasm. Its function is as follows. Together with the chaperonin GroEL, plays an essential role in assisting protein folding. The GroEL-GroES system forms a nano-cage that allows encapsulation of the non-native substrate proteins and provides a physical environment optimized to promote and accelerate protein folding. GroES binds to the apical surface of the GroEL ring, thereby capping the opening of the GroEL channel. This chain is Co-chaperonin GroES, found in Methylovorus sp. (strain SS1 / DSM 11726).